A 92-amino-acid chain; its full sequence is Small ribosomal subunit protein bS18 (92 aa).

The tract at residues 1 to 22 (MADERAPQRSTSGPRKKRPFQR) is disordered.

The protein belongs to the bacterial ribosomal protein bS18 family. In terms of assembly, part of the 30S ribosomal subunit. Forms a tight heterodimer with protein bS6.

In terms of biological role, binds as a heterodimer with protein bS6 to the central domain of the 16S rRNA, where it helps stabilize the platform of the 30S subunit. This Citrifermentans bemidjiense (strain ATCC BAA-1014 / DSM 16622 / JCM 12645 / Bem) (Geobacter bemidjiensis) protein is Small ribosomal subunit protein bS18.